The following is a 364-amino-acid chain: Mannose-1-phosphate guanyltransferase (364 aa).

It belongs to the transferase hexapeptide repeat family.

It is found in the cytoplasm. It carries out the reaction alpha-D-mannose 1-phosphate + GTP + H(+) = GDP-alpha-D-mannose + diphosphate. The protein operates within nucleotide-sugar biosynthesis; GDP-alpha-D-mannose biosynthesis; GDP-alpha-D-mannose from alpha-D-mannose 1-phosphate (GTP route): step 1/1. Functionally, involved in cell wall synthesis where it is required for glycosylation. Involved in cell cycle progression through cell-size checkpoint. The protein is Mannose-1-phosphate guanyltransferase (mpg-1) of Neurospora crassa (strain ATCC 24698 / 74-OR23-1A / CBS 708.71 / DSM 1257 / FGSC 987).